Reading from the N-terminus, the 168-residue chain is Large ribosomal subunit protein uL10 (168 aa).

The protein belongs to the universal ribosomal protein uL10 family. Part of the ribosomal stalk of the 50S ribosomal subunit. The N-terminus interacts with L11 and the large rRNA to form the base of the stalk. The C-terminus forms an elongated spine to which L12 dimers bind in a sequential fashion forming a multimeric L10(L12)X complex.

Functionally, forms part of the ribosomal stalk, playing a central role in the interaction of the ribosome with GTP-bound translation factors. This is Large ribosomal subunit protein uL10 from Pediococcus pentosaceus (strain ATCC 25745 / CCUG 21536 / LMG 10740 / 183-1w).